The sequence spans 629 residues: Pescadillo homolog (629 aa).

Residues 321 to 414 (RLRTLFKGLK…QLLPTNKYFI (94 aa)) form the BRCT domain. Disordered stretches follow at residues 439–470 (KALL…ETVD), 488–568 (EYKK…MVKP), and 598–629 (IEAS…KLGK). Residues S453 and S457 each carry the phosphoserine modification. Composition is skewed to acidic residues over residues 454 to 470 (DEDS…ETVD) and 498 to 523 (VNED…EELD). A compositionally biased stretch (basic and acidic residues) spans 524–535 (EKSKRLQEEKQK). The span at 542-551 (KVHKVNKRQV) shows a compositional bias: basic residues. Basic and acidic residues-rich tracts occupy residues 552-561 (HKAEVDEHRL) and 598-617 (IEAS…RKEA). Residues 584-627 (KEKEEWLLRKKRRTIEASEKEARKTAKREARKEAAAAAAKASKL) adopt a coiled-coil conformation. The span at 618–629 (AAAAAKASKLGK) shows a compositional bias: low complexity.

Belongs to the pescadillo family.

It is found in the nucleus. It localises to the nucleolus. The protein localises to the nucleoplasm. Its function is as follows. Required for maturation of ribosomal RNAs and formation of the large ribosomal subunit. This chain is Pescadillo homolog, found in Drosophila erecta (Fruit fly).